We begin with the raw amino-acid sequence, 283 residues long: Thymidylate synthase (283 aa).

Arg-22 is a dUMP binding site. The Nucleophile role is filled by Cys-160. DUMP-binding positions include 180-183 (RSCD), Asn-191, and 221-223 (HIY). Asp-183 lines the (6R)-5,10-methylene-5,6,7,8-tetrahydrofolate pocket. Ser-282 provides a ligand contact to (6R)-5,10-methylene-5,6,7,8-tetrahydrofolate.

This sequence belongs to the thymidylate synthase family. Bacterial-type ThyA subfamily. As to quaternary structure, homodimer.

Its subcellular location is the cytoplasm. The enzyme catalyses dUMP + (6R)-5,10-methylene-5,6,7,8-tetrahydrofolate = 7,8-dihydrofolate + dTMP. Its pathway is pyrimidine metabolism; dTTP biosynthesis. Functionally, catalyzes the reductive methylation of 2'-deoxyuridine-5'-monophosphate (dUMP) to 2'-deoxythymidine-5'-monophosphate (dTMP) while utilizing 5,10-methylenetetrahydrofolate (mTHF) as the methyl donor and reductant in the reaction, yielding dihydrofolate (DHF) as a by-product. This enzymatic reaction provides an intracellular de novo source of dTMP, an essential precursor for DNA biosynthesis. This Haemophilus influenzae (strain ATCC 51907 / DSM 11121 / KW20 / Rd) protein is Thymidylate synthase.